A 455-amino-acid chain; its full sequence is Ribulose bisphosphate carboxylase large chain (455 aa).

Residue K5 is modified to N6,N6,N6-trimethyllysine. Residues N114 and T164 each contribute to the substrate site. K166 (proton acceptor) is an active-site residue. A substrate-binding site is contributed by K168. Positions 192, 194, and 195 each coordinate Mg(2+). The residue at position 192 (K192) is an N6-carboxylysine. Catalysis depends on H285, which acts as the Proton acceptor. 3 residues coordinate substrate: R286, H318, and S370.

Belongs to the RuBisCO large chain family. Type I subfamily. As to quaternary structure, heterohexadecamer of 8 large chains and 8 small chains; disulfide-linked. The disulfide link is formed within the large subunit homodimers. Mg(2+) serves as cofactor. The disulfide bond which can form in the large chain dimeric partners within the hexadecamer appears to be associated with oxidative stress and protein turnover.

It is found in the plastid. The protein localises to the chloroplast. It catalyses the reaction 2 (2R)-3-phosphoglycerate + 2 H(+) = D-ribulose 1,5-bisphosphate + CO2 + H2O. It carries out the reaction D-ribulose 1,5-bisphosphate + O2 = 2-phosphoglycolate + (2R)-3-phosphoglycerate + 2 H(+). Functionally, ruBisCO catalyzes two reactions: the carboxylation of D-ribulose 1,5-bisphosphate, the primary event in carbon dioxide fixation, as well as the oxidative fragmentation of the pentose substrate in the photorespiration process. Both reactions occur simultaneously and in competition at the same active site. This chain is Ribulose bisphosphate carboxylase large chain, found in Lupinus latifolius (Broad-leaved lupine).